The primary structure comprises 174 residues: Phospholipase A2-like protein Y52B11A.8 (174 aa).

An N-terminal signal peptide occupies residues 1-18 (MRGLLVATWIFVSVAASA). 2 N-linked (GlcNAc...) asparagine glycosylation sites follow: Asn49 and Asn143. The segment at 137–174 (YEASGPNASTTEESPAEKDDYDYESHVAGLNATPSSST) is disordered.

Belongs to the phospholipase A2 family.

It is found in the secreted. This chain is Phospholipase A2-like protein Y52B11A.8, found in Caenorhabditis elegans.